Reading from the N-terminus, the 372-residue chain is MASVTLKNVCKAYGDVLISKNVDLQIDEGEFVVFVGPSGCGKSTLLRCIAGLEDITSGDLYIGDQRMNDVEPSKRGVGMVFQSYALYPHLNLYDNMSFGLKLAKADKAEIDKRVEHAAEILQLGHLLERQPKALSGGQRQRVAIGRTLVSQPNVFLLDEPLSNLDAALRVNMRAQITKLQRQLGCTMIYVTHDQVEAMTMADKIVVLDGGYVSQVGKPLELYHYPQNRFVAGFIGSPKMNFMSVFIDEVESERVKVQLSNGVSFWIPVDGTTVNRGDRMSLGIRPEHLLSATEADATIHGEVMIVEKLGNETQVYLNLEGADADVIYRQPDTLAVDTGDKLEIGIPAHRCHLFHSDGRACKRLFKENGVDFE.

In terms of domain architecture, ABC transporter spans 4-234 (VTLKNVCKAY…PQNRFVAGFI (231 aa)). 36-43 (GPSGCGKS) is a binding site for ATP.

This sequence belongs to the ABC transporter superfamily. Maltooligosaccharide importer (TC 3.A.1.1.1) family. The complex is composed of two ATP-binding proteins (MalK), two transmembrane proteins (MalG and MalK) and a solute-binding protein (MalE).

It localises to the cell inner membrane. It catalyses the reaction D-maltose(out) + ATP + H2O = D-maltose(in) + ADP + phosphate + H(+). Functionally, part of the ABC transporter complex MalEFGK involved in maltose/maltodextrin import. Responsible for energy coupling to the transport system. This is Maltose/maltodextrin import ATP-binding protein MalK from Vibrio parahaemolyticus serotype O3:K6 (strain RIMD 2210633).